A 343-amino-acid chain; its full sequence is Palmitoyltransferase ZDHHC4 (343 aa).

Over 1-2 (MD) the chain is Lumenal. The chain crosses the membrane as a helical span at residues 3–23 (FLVLFLFYLAFLLICVVLICI). At 24–67 (FTKSQRLKAVVLGGAQVCSRVIPQCLQRAVQTLLHQLFHTRHPT) the chain is on the cytoplasmic side. Residues 68–88 (FIVLHLLLQGLVYAEYTCEVF) form a helical membrane-spanning segment. Residues 89-100 (GYCRELEFSLPY) are Lumenal-facing. Residues 101-121 (LLLPYVLLSVNLVFFTLTCAA) traverse the membrane as a helical segment. Residues 122-193 (NPGTITKANE…NCIGAWNTRY (72 aa)) are Cytoplasmic-facing. Positions 149-199 (SRCPTCDLRKPARSKHCRLCDRCVHRFDHHCVWVNNCIGAWNTRYFLIYLL) constitute a DHHC domain. Cysteine 179 serves as the catalytic S-palmitoyl cysteine intermediate. A helical transmembrane segment spans residues 194-214 (FLIYLLTLTASAATIATVTAA). Residues 215–255 (FLLRLVTVSDLYQETYLDDVGHFQAVDTVFLIQHLFLAFPR) are Lumenal-facing. A helical membrane pass occupies residues 256–276 (IVFLLGFVIVLSMLLAGYLCF). Topologically, residues 277-343 (ALYLAATNQT…ATPSYKKKEK (67 aa)) are cytoplasmic. Residues 340-343 (KKEK) carry the Di-lysine motif motif.

It belongs to the DHHC palmitoyltransferase family. Interacts with CPT1A.

It is found in the endoplasmic reticulum membrane. Its subcellular location is the golgi apparatus membrane. The protein resides in the cell membrane. The catalysed reaction is L-cysteinyl-[protein] + hexadecanoyl-CoA = S-hexadecanoyl-L-cysteinyl-[protein] + CoA. Its function is as follows. Palmitoyltransferase that could catalyze the addition of palmitate onto protein substrates including the D(2) dopamine receptor DRD2, GSK3B or MAVS. Mediates GSK3B palmitoylation to prevent its AKT1-mediated phosphorylation leading to activation of the STAT3 signaling pathway. Also catalyzes MAVS palmitoylation which promotes its stabilization and activation by inhibiting 'Lys-48'- but facilitating 'Lys-63'-linked ubiquitination. The chain is Palmitoyltransferase ZDHHC4 from Mus musculus (Mouse).